A 352-amino-acid polypeptide reads, in one-letter code: N-acetyl-gamma-glutamyl-phosphate reductase (352 aa).

Cysteine 155 is an active-site residue.

Belongs to the NAGSA dehydrogenase family. Type 1 subfamily.

It is found in the cytoplasm. The enzyme catalyses N-acetyl-L-glutamate 5-semialdehyde + phosphate + NADP(+) = N-acetyl-L-glutamyl 5-phosphate + NADPH + H(+). It participates in amino-acid biosynthesis; L-arginine biosynthesis; N(2)-acetyl-L-ornithine from L-glutamate: step 3/4. Functionally, catalyzes the NADPH-dependent reduction of N-acetyl-5-glutamyl phosphate to yield N-acetyl-L-glutamate 5-semialdehyde. The chain is N-acetyl-gamma-glutamyl-phosphate reductase from Brachyspira hyodysenteriae (strain ATCC 49526 / WA1).